The primary structure comprises 480 residues: Probable tRNA N6-adenosine threonylcarbamoyltransferase, mitochondrial (480 aa).

Residues 1–86 (MVRLFLTLSP…NPNFDDNLVV (86 aa)) constitute a mitochondrion transit peptide. Residues H194 and H198 each contribute to the a divalent metal cation site. Substrate-binding positions include 217–221 (LISGG), D250, G265, E269, 373–374 (SN), and T401. D402 is a binding site for a divalent metal cation.

This sequence belongs to the KAE1 / TsaD family. As to quaternary structure, homodimer. The cofactor is a divalent metal cation. Expressed in young developing leaves, roots, flowers and siliques.

It localises to the mitochondrion inner membrane. It carries out the reaction L-threonylcarbamoyladenylate + adenosine(37) in tRNA = N(6)-L-threonylcarbamoyladenosine(37) in tRNA + AMP + H(+). Required for the formation of a threonylcarbamoyl group on adenosine at position 37 (t(6)A37) in mitochondrial tRNAs that read codons beginning with adenine. Probably involved in the transfer of the threonylcarbamoyl moiety of threonylcarbamoyl-AMP (TC-AMP) to the N6 group of A37. Involved in mitochondrial genome maintenance. May have a role in embryonic development in plants. In Arabidopsis thaliana (Mouse-ear cress), this protein is Probable tRNA N6-adenosine threonylcarbamoyltransferase, mitochondrial.